Consider the following 101-residue polypeptide: NAD(P)H-quinone oxidoreductase subunit 4L, chloroplastic (101 aa).

Helical transmembrane passes span 2 to 22 (MLEY…YGLI), 32 to 52 (MCLE…SYFF), and 61 to 81 (IFSI…LAIV).

Belongs to the complex I subunit 4L family. As to quaternary structure, NDH is composed of at least 16 different subunits, 5 of which are encoded in the nucleus.

The protein localises to the plastid. Its subcellular location is the chloroplast thylakoid membrane. It catalyses the reaction a plastoquinone + NADH + (n+1) H(+)(in) = a plastoquinol + NAD(+) + n H(+)(out). The enzyme catalyses a plastoquinone + NADPH + (n+1) H(+)(in) = a plastoquinol + NADP(+) + n H(+)(out). Functionally, NDH shuttles electrons from NAD(P)H:plastoquinone, via FMN and iron-sulfur (Fe-S) centers, to quinones in the photosynthetic chain and possibly in a chloroplast respiratory chain. The immediate electron acceptor for the enzyme in this species is believed to be plastoquinone. Couples the redox reaction to proton translocation, and thus conserves the redox energy in a proton gradient. The chain is NAD(P)H-quinone oxidoreductase subunit 4L, chloroplastic from Ipomoea purpurea (Common morning glory).